A 359-amino-acid polypeptide reads, in one-letter code: tRNA N6-adenosine threonylcarbamoyltransferase (359 aa).

Fe cation-binding residues include His-115 and His-119. Substrate-binding positions include 137-141, Asp-170, Gly-183, and Asn-283; that span reads LVSGG. Asp-311 provides a ligand contact to Fe cation. The interval 328 to 359 is disordered; the sequence is APDSLDIAPRSRWPLDEKSAPVFGTGRRGAKA.

Belongs to the KAE1 / TsaD family. It depends on Fe(2+) as a cofactor.

It localises to the cytoplasm. It catalyses the reaction L-threonylcarbamoyladenylate + adenosine(37) in tRNA = N(6)-L-threonylcarbamoyladenosine(37) in tRNA + AMP + H(+). Functionally, required for the formation of a threonylcarbamoyl group on adenosine at position 37 (t(6)A37) in tRNAs that read codons beginning with adenine. Is involved in the transfer of the threonylcarbamoyl moiety of threonylcarbamoyl-AMP (TC-AMP) to the N6 group of A37, together with TsaE and TsaB. TsaD likely plays a direct catalytic role in this reaction. The chain is tRNA N6-adenosine threonylcarbamoyltransferase from Brucella melitensis biotype 2 (strain ATCC 23457).